Here is a 340-residue protein sequence, read N- to C-terminus: Guanine nucleotide-binding protein subunit beta-4 (340 aa).

Position 2 is an N-acetylserine (Ser2). Ser2 bears the Phosphoserine mark. WD repeat units follow at residues 53–92 (GHLA…KMHA), 95–134 (LRSS…GNVR), 141–179 (GHTG…QTTT), 182–221 (GHSG…CRQS), and 224–263 (GHIS…ELLL). The residue at position 266 (His266) is a Phosphohistidine. 2 WD repeats span residues 268–307 (NIIC…RAGV) and 310–339 (GHDN…LRIW).

This sequence belongs to the WD repeat G protein beta family. In terms of assembly, g proteins are composed of 3 units, alpha, beta and gamma. Widely expressed in the brain. Highest levels found in the hippocampus and layers v and vi of the neocortex.

Its function is as follows. Guanine nucleotide-binding proteins (G proteins) are involved as a modulator or transducer in various transmembrane signaling systems. The beta and gamma chains are required for the GTPase activity, for replacement of GDP by GTP, and for G protein-effector interaction. This is Guanine nucleotide-binding protein subunit beta-4 (Gnb4) from Rattus norvegicus (Rat).